We begin with the raw amino-acid sequence, 1120 residues long: MYGSARSVGKVEPSSQSPGRSPRLPRSPRLGHRRTNSTGGSSGNSVGGGSGKTLSMENIQSLNAAYATSGPMYLSDHENVGAETPKSTMTLGRSGGRLPYGVRMTAMGSSPNIASSGVASDTIAFGEHHLPPVSMASTVPHSLRQARDNTIMDLQTQLKEVLRENDLLRKDVEVKESKLSSSMNSIKTFWSPELKKERALRKDEASKITIWKEQYRVVQEENQHMQMTIQALQDELRIQRDLNQLFQQDSSSRTGEPCVAELTEENFQRLHAEHERQAKELFLLRKTLEEMELRIETQKQTLNARDESIKKLLEMLQSKGLSAKATEEDHERTRRLAEAEMHVHHLESLLEQKEKENNMLREEMHRRFENAPDSAKTKALQTVIEMKDSKISSMERGLRDLEEEIQMLKSNGALSSEEREEEMKQMEVYRSHSKFMKNKVEQLKEELSSKDAQGEELKKRAAGLQSEIGQVKQELSRKDTELLALQTKLETLTNQFSDSKQHIEVLKESLTAKEQRAAILQTEVDALRLRLEEKETMLNKKTKQIQDMAEEKGTQAGEIHDLKDMLDVKERKVNVLQKKIENLQEQLRDKEKQMSSLKERVKSLQADTTNTDTALTTLEEALADKERTIERLKEQRDRDEREKQEEIDTYKKDLKDLREKVSLLQGDLSEKEASLLDIKEHASSLASSGLKKDSRLKTLEIALEQKKEECLKMESQLKKAHEATLEARASPEMSDRIQQLEREISRYKDESSKAQTEVDRLLEILKEVENEKNDKDKKIAELESLTSRQVKDQNKKVANLKHKEQVEKKKSAQMLEEARRREDSLSDSSQQLQDSLRKKDDRIEELEEALRESVQITAEREMVLAQEESARTNAEKQVEELLMAMEKVKQELESMKAKLSSTQQSLAEKETHLTNLRAERRKHLEEVLEMKQEALLAAISEKDANIALLELSSSKKKTQEEVAALKREKDRLVQQLKQQTQNRMKLMADNYEDDHFRSSRSNQTNHKPSPDQIIQPLLELDQNRSKLKLYIGHLTALCHDRDPLILRGLTPPASYNADGEQAAWENELQQMTQEQLQNELEKVEGDNAELQEFANTILQQIADHCPDILEQVVNALEESS.

The interval 1 to 54 is disordered; that stretch reads MYGSARSVGKVEPSSQSPGRSPRLPRSPRLGHRRTNSTGGSSGNSVGGGSGKTL. Lys10 is subject to N6-acetyllysine. Positions 13–28 are enriched in low complexity; the sequence is PSSQSPGRSPRLPRSP. Residues Ser17, Ser21, and Ser37 each carry the phosphoserine modification. Thr38 carries the post-translational modification Phosphothreonine. The span at 40–51 shows a compositional bias: gly residues; the sequence is GSSGNSVGGGSG. Ser55, Ser75, Ser94, Ser824, Leu965, and Ser1009 each carry phosphoserine. Residues 144–992 are a coiled coil; that stretch reads RQARDNTIMD…RMKLMADNYE (849 aa). Basic and acidic residues predominate over residues 801–824; sequence KHKEQVEKKKSAQMLEEARRREDS. The interval 801–840 is disordered; the sequence is KHKEQVEKKKSAQMLEEARRREDSLSDSSQQLQDSLRKKD. Thr1050 carries the phosphothreonine modification. Residues 1050–1112 form the FIP-RBD domain; sequence TPPASYNADG…DHCPDILEQV (63 aa). Positions 1060–1104 form a coiled coil; that stretch reads EQAAWENELQQMTQEQLQNELEKVEGDNAELQEFANTILQQIADH.

Interacts with the GTB-bound forms of RAB6A isoform 1 and isoform 2 and with RAB6B. The interaction was strongest with RAB6B, followed by RAB6A isoform 2 and weakest with RAB6A isoform 1. Part of a complex with CHUK, IKBKB and IKBKG. Interacts with CHUK, IKBKB and IKBKG. The interaction with IKBKG is independent of CHUK and IKBKB. Interacts with NFKBIA. Isoform 2 interacts through its C-terminus with the PDZ domains of RIMS1 and RIMS2. Interacts with ERC2/CAST1. Interacts with SDCCAG8. Part of a cortical microtubule stabilization complex (CMSC) composed of KANK1, PPFIA1, PPFIBP1, ERC1/ELKS, PHLDB2/LL5beta, CLASPs, KIF21A and possibly additional interactors; within CMSCs KANK1 and PHLDB2/LL5beta appear to be the core components for targeting of microtubule-binding proteins KIF21A and CLASPs, whereas PPFIA1, PPFIBP1 and ERC1/ELKS serve as scaffolds for protein clustering. Widely expressed.

Its subcellular location is the cytoplasm. The protein resides in the cytoskeleton. It is found in the microtubule organizing center. The protein localises to the centrosome. It localises to the membrane. Its subcellular location is the golgi apparatus membrane. The protein resides in the presynaptic active zone. It is found in the cell projection. The protein localises to the podosome. In terms of biological role, regulatory subunit of the IKK complex. Probably recruits IkappaBalpha/NFKBIA to the complex. May be involved in the organization of the cytomatrix at the nerve terminals active zone (CAZ) which regulates neurotransmitter release. May be involved in vesicle trafficking at the CAZ. May be involved in Rab-6 regulated endosomes to Golgi transport. The sequence is that of ELKS/Rab6-interacting/CAST family member 1 from Mus musculus (Mouse).